The following is a 288-amino-acid chain: Oxaloacetate decarboxylase (288 aa).

A substrate-binding site is contributed by serine 47. Aspartate 85 contributes to the Mg(2+) binding site. Residues arginine 156 and histidine 232 each coordinate substrate.

It belongs to the isocitrate lyase/PEP mutase superfamily. Oxaloacetate decarboxylase family. In terms of assembly, homotetramer; dimer of dimers. It depends on Mg(2+) as a cofactor.

The catalysed reaction is oxaloacetate + H(+) = pyruvate + CO2. Its function is as follows. Catalyzes the decarboxylation of oxaloacetate into pyruvate. Seems to play a role in maintaining cellular concentrations of bicarbonate and pyruvate. The polypeptide is Oxaloacetate decarboxylase (Bradyrhizobium diazoefficiens (strain JCM 10833 / BCRC 13528 / IAM 13628 / NBRC 14792 / USDA 110)).